We begin with the raw amino-acid sequence, 367 residues long: tRNA-specific 2-thiouridylase MnmA (367 aa).

ATP is bound by residues 10-17 and methionine 36; that span reads AMSGGVDS. Cysteine 106 functions as the Nucleophile in the catalytic mechanism. Cysteine 106 and cysteine 204 are oxidised to a cystine. Position 130 (glycine 130) interacts with ATP. Positions 154–156 are interaction with tRNA; it reads KDQ. The Cysteine persulfide intermediate role is filled by cysteine 204. The interval 310-311 is interaction with tRNA; it reads RY.

It belongs to the MnmA/TRMU family.

The protein resides in the cytoplasm. It carries out the reaction S-sulfanyl-L-cysteinyl-[protein] + uridine(34) in tRNA + AH2 + ATP = 2-thiouridine(34) in tRNA + L-cysteinyl-[protein] + A + AMP + diphosphate + H(+). In terms of biological role, catalyzes the 2-thiolation of uridine at the wobble position (U34) of tRNA, leading to the formation of s(2)U34. The protein is tRNA-specific 2-thiouridylase MnmA of Desulforamulus reducens (strain ATCC BAA-1160 / DSM 100696 / MI-1) (Desulfotomaculum reducens).